The chain runs to 585 residues: Arginine--tRNA ligase (585 aa).

The 'HIGH' region signature appears at 126-136 (PNIAKEMHVGH).

This sequence belongs to the class-I aminoacyl-tRNA synthetase family. In terms of assembly, monomer.

It is found in the cytoplasm. It carries out the reaction tRNA(Arg) + L-arginine + ATP = L-arginyl-tRNA(Arg) + AMP + diphosphate. This is Arginine--tRNA ligase from Trichodesmium erythraeum (strain IMS101).